The primary structure comprises 60 residues: Mastoparan (60 aa).

An N-terminal signal peptide occupies residues 1–27 (MKDTILILFTAFIALLGFFGMSAEALA). AXPX repeat units lie at residues 27–30 (ADPL), 31–34 (ADPS), 35–38 (AGPN), and 41–44 (ADPE). Positions 28-45 (DPLADPSAGPNAEADPEA) are excised as a propeptide. Residue Leu59 is modified to Leucine amide.

Belongs to the MCD family. Mastoparan subfamily. Expressed by the venom gland.

It is found in the secreted. The protein resides in the target cell membrane. Its function is as follows. Mast cell degranulating peptide. Its mast cell degranulation activity may be related to the activation of G-protein coupled receptors in mast cells as well as interaction with other proteins located in cell endosomal membranes in the mast cells. Has a membranolytic activity on human glioblastoma multiforme cells (brain tumor cells) that leads to cell necrosis. This Vespa orientalis (Oriental hornet) protein is Mastoparan.